The following is a 396-amino-acid chain: Phosphopentomutase (396 aa).

Mn(2+) contacts are provided by Asp14, Asp286, His291, Asp327, His328, and His339.

Belongs to the phosphopentomutase family. The cofactor is Mn(2+).

The protein localises to the cytoplasm. The catalysed reaction is 2-deoxy-alpha-D-ribose 1-phosphate = 2-deoxy-D-ribose 5-phosphate. The enzyme catalyses alpha-D-ribose 1-phosphate = D-ribose 5-phosphate. The protein operates within carbohydrate degradation; 2-deoxy-D-ribose 1-phosphate degradation; D-glyceraldehyde 3-phosphate and acetaldehyde from 2-deoxy-alpha-D-ribose 1-phosphate: step 1/2. Its function is as follows. Isomerase that catalyzes the conversion of deoxy-ribose 1-phosphate (dRib-1-P) and ribose 1-phosphate (Rib-1-P) to deoxy-ribose 5-phosphate (dRib-5-P) and ribose 5-phosphate (Rib-5-P), respectively. This chain is Phosphopentomutase, found in Staphylococcus epidermidis (strain ATCC 35984 / DSM 28319 / BCRC 17069 / CCUG 31568 / BM 3577 / RP62A).